The sequence spans 3658 residues: MSRRAPGSRLSSGGGGTKYPRSWNDWQPRTDSASADPDTLKYSSSRDRGVSSSYGLQPSNSAVVSRQRHDDTRGHADIQNDEKGGYSVNGGSGENTYGRKSLGQELRINNVTSPEFTSVQHGSRALATKDMRKSQERSMSYSDESRLSNLLRRITREDDRDRRLATVKQLKEFIQQPENKLVLVKQLDNILAAVHDVLNESSKLLQELRQEGACCLGLLCASLSYEAEKIFKWIFSKFSSSAKDEVKLLYLCATYRALETVGEKKAFSSVMQLVMTSLQSILENVDTPELLCKCVKCILLVARCYPHIFSTNFRDTVDILVGWHIDHTQKPSLTQQVSGWLQSLEPFWVADLAFSTTLLGQFLEDMEAYAEDLSHVASGESVDEDVPPPSVSLPKLAALLRVFSTVVRSIGERFSPIRGPPITEAYVTDVLYRVMRCVTAANQVFFSEAVLTAANECVGVLLGSLDPSMTIHCDMVITYGLDQLENCQTCGTDYIISVLNLLTLIVEQINTKLPSSFVEKLFIPSSKLLFLRYHKEKEVVAVAHAVYQAVLSLKNIPVLETAYKLILGEMTCALNNLLHSLQLPDACSEIKHEAFQNHVFNIDNANFVVIFDLSALTTIGNAKNSLIGMWALSPTVFALLSKNLMIVHSDLAVHFPAIQYAVLYTLYSHCTRHDHFISSSLSSSSPSLFDGAVISTVTTATKKHFSIILNLLGILLKKDNLNQDTRKLLMTWALEVAVLMKKSETYAPLFSLPSFHKFSKGLLANTLVEDVNICLQACSSLHALSSSLPDDLLQRCVDVCRVQLVHSGTRIRQAFGKLLKSIPLDVVLSNNNHTEIQEISLALRSHMSKAPSNTFHPQDFSDVISFILYGNSHRTGKDNWLERLFYSCQRLDKRDQSTIPRNLLKTDAVLWQWAIWEAAQFTVLSKLRTPLGRAQDTFQTIEGIIRSLAAHTLNPDQDVSQWTTADNDEGHGSNQLRLVLLLQYLENLEKLMYNAYEGCANALTSPPKVIRTFFYTNRQTCQDWLTRIRLSIMRVGLLAGQPAVTVRHGFDLLTEMKTNSLTQGSELEVTIMMVVEALCELHCPEAIQGIAVWSSSAVGKNLLWINSVAQQAEGRFEKASVEYQEHLCAMTGVDCCISSFDKSVLTLANAGRNSASPKHSLNGESRKTVLSKSIDSSPEVISYLGNKACECYISIADWAAVQEWQNAVHDLKKNSSSTSLNLKADFNYIKSLSSFESGEFVECTEQLELLPGENINLLAGGSKEKIDMKKLLPNMLSPDPRELQKSIEVQLLRSSVFLATALNHMEQDQKWQSLTENVVKYLKQTSRIAIGPLRLSTLTVSQSLPVLSTLQLYCSSALENTVSNRLSTEDCLIPLFSDALRSCKQHDVRPWMQALRYTMYQNQLLEKIKEQTVPIRSHLMELGLTAAKFARKRGNVSLATRLLAQCSEVQLGKTTTAQDLVQHFKKLSTQGQVDEKWGPELDIEKTKLLYTAGQSTHAMEMLSSCAISFCKSAKAEYAVAKSILTLAKWVQAEWKEISGQLRQVYRAQQQQNLSGLSTLSRNILALIELPSANTVGEEHPRIESESTVHIGVGEPDFILGQLYHLSSVQAPEVAKSWAALASWAYRWGRKVVDNASQGEGVRLLPREKSEVQNLLPDTITEEEKERIYGILGQAVCRPAGIQDEDITLQITESEDNEDDDMVDVIWRQLISSCPWLSELDENATEGVIKVWRKVVDRIFSLYKLSCSAYFTFLKLNAGQVLLDEDDPRLHLSHRAEQSTDDVIVMATLRLLRLLVKHAGELRQYLEHGLETTPTAPWRGIIPQLFSRLNHPEVYVRQSICNLLCRVAQDSPHLILYPAIVGTISLSSESQASGNKYSSAIPTLLGNIQGEELLVSECEGGSPPASQDSNKDEPKSGLNEDQAMMQDCYSKIVDKLSSANPTMVLQVQMLVAELRRVTVLWDELWLGVLLQQHMYVLRRIQQLEDEVKRVQNNNTLRKEEKIAIMREKHTALMKPIVFALEHVRSITAAPAETPHEKWFQDNYGDAIDNALEKLKTPSNPAKPGSSWIPFKEIMLSLQQRAQKRASYILRLDEISPWLAAMTNTEIALPGEVSARDTVTIHSVGGTITILPTKTKPKKLLFLGSDGKSYPYLFKGLEDLHLDERIMQFLSIVNTMFATINRQETPRFHARHYSVTPLGTRSGLIQWVDGATPLFGLYKRWQQREAALQAQKAQDSYQTPQNPSIVPRPSELYYSKIGPALKTVGLSLDVSRRDWPLHVMKAVLEELMEATPPNLLAKELWSSCTTPDEWWRVTQSYARSTAVMSMVGYIIGLGDRHLDNVLIDMTTGEVVHIDYNVCFEKGKSLRVPEKVPFRMTQNIETALGVTGVEGVFRLSCEQVLHIMRRGRETLLTLLEAFVYDPLVDWTAGGEAGFAGAVYGGGGQQAESKQSKREMEREITRSLFSSRVAEIKVNWFKNRDEMLVVLPKLDSSLDEYLSLQEQLTDVEKLQGKLLEEIEFLEGAEGVDHPSHTLQHRYSEHTQLQTQQRAVQEAIQVKLNEFEQWITHYQAAFNNLEATQLASLLQEISTQMDLGPPSYVPATAFLQNAGQAHLISQCEQLEGEVGALLQQRRSVLRGCLEQLHHYATVALQYPKAIFQKHRIEQWKAWMEELICNTTVERCQELYRKYEMQYAPQPPPTVCQFITATEMTLQRYAADINSRLIRQVERLKQEAVTVPVCEDQLKEIERCIKVFLHENGEEGSLSLASVIISALCTLTRRNLMMEGAASSAGEQLVDLTSRDGAWFLEELCSMSGNVTCLVQLLKQCHLVPQDLDIPNPVEASEAVHLANGVYTSLQELNSNFRQIIFPEALRCLMKGECTLESMLHELDSLIEQTTDGVPLQTLVESLQAYLRNTAMGLEEETHAHYIDVARMLHAQYGELIQPRNGSVDETPKMSAGQMLLVAFDGMFAQVETAFGLLVEKLNKMEIPVAWRKIDIIREARSTQVNFFDDDNHRQVLEEIFFLKRLQTIKEFFRLCGTFSKTLSGSSSLEDQNTVNGPVQIVNVKTLFRNSCFSEDQMAKPIKAFTADFVRQLLIGLPNQALGLTLCSFISALGVDIIAQVEAKDFGAESKVSVDDLCKKAVEHNIQVGKFSQLVMNRATVLASSYDTAWKKHDLVRRLETSISSCKTSLQRVQLHIAMFQWQHEDLLISRPQAMSVTPPRSAILTSMKKKLHALSQIETSIGTVQEKLAALEASIEQRLKWAGGANPALAPVLQDFEATIAERRNLVLKESQRANQVTFLCSNIIHFESLRTRTAEALSLDAALFELIKRCQQMCSFASQFNSSVSELELRLLQRVDTTLEHPIGSSEWLLSAHKQLTQDMSTQRAVQTEKEQQIETVCETIQSLVDSVKTVLTGHNRQLGDVKHLLKAMAKDEEAALADAEDIPYESSVRQFLAEYKSWQDNIQTVLFTLVQAMGQVRSQEHVEMLQEITPTLKELKTQSQSIYNNLVSFASPLVTDAANECSSPTSSATYQPSFAAAVRSNTGQKTQPDVMSQNAKKLIQKNLATSADTPPSTIPGTGKSIACSPKKAVRDPKTGKAVQERNSYAVSVWKRVKAKLEGRDVDPNRRMSVAEQVDYVIKEATNLDNLAQLYEGWTAWV.

2 disordered regions span residues 1 to 99 (MSRR…TYGR) and 116 to 142 (FTSV…MSYS). The span at 24-33 (NDWQPRTDSA) shows a compositional bias: polar residues. Composition is skewed to basic and acidic residues over residues 67 to 84 (QRHD…DEKG) and 127 to 136 (ATKDMRKSQE). Residue Lys-171 is modified to N6-acetyllysine. The FAT domain occupies 1281 to 1864 (RELQKSIEVQ…LYPAIVGTIS (584 aa)). One copy of the HEAT repeat lies at 1815 to 1850 (APWRGIIPQLFSRLNHPEVYVRQSICNLLCRVAQDS). Residues 1896–1917 (ECEGGSPPASQDSNKDEPKSGL) are disordered. The 340-residue stretch at 2122–2461 (VGGTITILPT…MEREITRSLF (340 aa)) folds into the PI3K/PI4K catalytic domain. Positions 2128-2134 (ILPTKTK) are G-loop. The catalytic loop stretch occupies residues 2330 to 2338 (GLGDRHLDN). The activation loop stretch occupies residues 2350-2374 (HIDYNVCFEKGKSLRVPEKVPFRMT). Thr-3547 bears the Phosphothreonine mark. 2 positions are modified to phosphoserine: Ser-3553 and Ser-3567. The segment covering 3565–3576 (ATSADTPPSTIP) has biased composition (polar residues). The tract at residues 3565 to 3588 (ATSADTPPSTIPGTGKSIACSPKK) is disordered. Phosphothreonine is present on residues Thr-3570 and Thr-3574. Residues 3626–3658 (RRMSVAEQVDYVIKEATNLDNLAQLYEGWTAWV) enclose the FATC domain.

It belongs to the PI3/PI4-kinase family. Component of the SMG1C complex composed of SMG1, SMG8 and SMG9; the recruitment of SMG8 to SMG1 N-terminus induces a large conformational change in the SMG1 C-terminal head domain containing the catalytic domain. Component of the transient SURF (SMG1-UPF1-eRF1-eRF3) complex. Part of a complex composed of SMG1, DHX34 and UPF1; within the complex DHX34 acts as a scaffolding protein to facilitate SMG1 phosphorylation of UPF1. Interacts with PRKCI. Interacts with TELO2 and TTI1. Interacts with RUVBL1 and RUVBL2. Interacts with DHX34 (via C-terminus); the interaction is RNA-independent. It depends on Mn(2+) as a cofactor. Autophosphorylated.

The protein localises to the nucleus. It localises to the cytoplasm. It carries out the reaction L-seryl-[protein] + ATP = O-phospho-L-seryl-[protein] + ADP + H(+). It catalyses the reaction L-threonyl-[protein] + ATP = O-phospho-L-threonyl-[protein] + ADP + H(+). Its activity is regulated as follows. Inhibited by caffeine, LY294002 and wortmannin. Functionally, serine/threonine protein kinase involved in both mRNA surveillance and genotoxic stress response pathways. Recognizes the substrate consensus sequence [ST]-Q. Plays a central role in nonsense-mediated decay (NMD) of mRNAs containing premature stop codons by phosphorylating UPF1/RENT1. Recruited by release factors to stalled ribosomes together with SMG8 and SMG9 (forming the SMG1C protein kinase complex), and UPF1 to form the transient SURF (SMG1-UPF1-eRF1-eRF3) complex. In EJC-dependent NMD, the SURF complex associates with the exon junction complex (EJC) through UPF2 and allows the formation of an UPF1-UPF2-UPF3 surveillance complex which is believed to activate NMD. Also acts as a genotoxic stress-activated protein kinase that displays some functional overlap with ATM. Can phosphorylate p53/TP53 and is required for optimal p53/TP53 activation after cellular exposure to genotoxic stress. Its depletion leads to spontaneous DNA damage and increased sensitivity to ionizing radiation (IR). May activate PRKCI but not PRKCZ. The chain is Serine/threonine-protein kinase SMG1 from Mus musculus (Mouse).